We begin with the raw amino-acid sequence, 179 residues long: Large ribosomal subunit protein uL5 (179 aa).

Belongs to the universal ribosomal protein uL5 family. As to quaternary structure, part of the 50S ribosomal subunit; part of the 5S rRNA/L5/L18/L25 subcomplex. Contacts the 5S rRNA and the P site tRNA. Forms a bridge to the 30S subunit in the 70S ribosome.

This is one of the proteins that bind and probably mediate the attachment of the 5S RNA into the large ribosomal subunit, where it forms part of the central protuberance. In the 70S ribosome it contacts protein S13 of the 30S subunit (bridge B1b), connecting the 2 subunits; this bridge is implicated in subunit movement. Contacts the P site tRNA; the 5S rRNA and some of its associated proteins might help stabilize positioning of ribosome-bound tRNAs. In Albidiferax ferrireducens (strain ATCC BAA-621 / DSM 15236 / T118) (Rhodoferax ferrireducens), this protein is Large ribosomal subunit protein uL5.